A 215-amino-acid chain; its full sequence is Extracellular small neutral protease (215 aa).

The N-terminal stretch at 1–30 (MRMTRAASALAGLGLAVAAALGSVAPASAA) is a signal peptide. T152 lines the Ca(2+) pocket. H157 contacts Zn(2+). The active site involves E158. Residues H161 and D167 each coordinate Zn(2+). Cysteines 173 and 186 form a disulfide.

This sequence belongs to the peptidase M7 family. Requires Zn(2+) as cofactor.

It localises to the secreted. The enzyme catalyses Hydrolyzes proteins with a preference for Tyr or Phe in the P1' position. Has no action on amino-acid p-nitroanilides.. The protein is Extracellular small neutral protease (snpA) of Streptomyces coelicolor.